Consider the following 104-residue polypeptide: uncharacterized protein (104 aa).

The protein to A.aeolicus AQ_377.

This is an uncharacterized protein from Archaeoglobus fulgidus (strain ATCC 49558 / DSM 4304 / JCM 9628 / NBRC 100126 / VC-16).